A 250-amino-acid polypeptide reads, in one-letter code: Hydroxyacylglutathione hydrolase (250 aa).

Positions 52, 54, 56, 57, 107, 128, and 166 each coordinate Zn(2+).

This sequence belongs to the metallo-beta-lactamase superfamily. Glyoxalase II family. As to quaternary structure, monomer. The cofactor is Zn(2+).

It carries out the reaction an S-(2-hydroxyacyl)glutathione + H2O = a 2-hydroxy carboxylate + glutathione + H(+). It participates in secondary metabolite metabolism; methylglyoxal degradation; (R)-lactate from methylglyoxal: step 2/2. Functionally, thiolesterase that catalyzes the hydrolysis of S-D-lactoyl-glutathione to form glutathione and D-lactic acid. The polypeptide is Hydroxyacylglutathione hydrolase (Neisseria gonorrhoeae (strain ATCC 700825 / FA 1090)).